The sequence spans 528 residues: Membrane protein insertase YidC (528 aa).

4 consecutive transmembrane segments (helical) span residues 5–25 (VVIAVILSIAVLYAYSMIFPP), 346–366 (YGIAIIIITVILKLLFFPLTH), 416–436 (LPMIVQIPVFFALYKALMFSI), and 486–506 (MLALPVVFTFMFLNFPSGLVL).

It belongs to the OXA1/ALB3/YidC family. Type 1 subfamily. Interacts with the Sec translocase complex via SecD. Specifically interacts with transmembrane segments of nascent integral membrane proteins during membrane integration.

It localises to the cell inner membrane. Required for the insertion and/or proper folding and/or complex formation of integral membrane proteins into the membrane. Involved in integration of membrane proteins that insert both dependently and independently of the Sec translocase complex, as well as at least some lipoproteins. Aids folding of multispanning membrane proteins. In Geotalea uraniireducens (strain Rf4) (Geobacter uraniireducens), this protein is Membrane protein insertase YidC.